A 570-amino-acid polypeptide reads, in one-letter code: Sulfite reductase [NADPH] hemoprotein beta-component (570 aa).

Positions 434, 440, 479, and 483 each coordinate [4Fe-4S] cluster. C483 is a binding site for siroheme.

Belongs to the nitrite and sulfite reductase 4Fe-4S domain family. In terms of assembly, alpha(8)-beta(8). The alpha component is a flavoprotein, the beta component is a hemoprotein. Siroheme serves as cofactor. The cofactor is [4Fe-4S] cluster.

It catalyses the reaction hydrogen sulfide + 3 NADP(+) + 3 H2O = sulfite + 3 NADPH + 4 H(+). The protein operates within sulfur metabolism; hydrogen sulfide biosynthesis; hydrogen sulfide from sulfite (NADPH route): step 1/1. Component of the sulfite reductase complex that catalyzes the 6-electron reduction of sulfite to sulfide. This is one of several activities required for the biosynthesis of L-cysteine from sulfate. The polypeptide is Sulfite reductase [NADPH] hemoprotein beta-component (Salmonella agona (strain SL483)).